The chain runs to 483 residues: PAT complex subunit CCDC47 (483 aa).

The signal sequence occupies residues Met1–Ala20. At Lys21–Ser135 the chain is on the cytoplasmic side. Residues Met46–Asp118 form a disordered region. Residues Thr60 to Gly104 are compositionally biased toward acidic residues. Positions Tyr105–Asp118 are enriched in basic and acidic residues. The helical transmembrane segment at Tyr136–Ile155 threads the bilayer. Over Gly156 to Met483 the chain is Lumenal. An N-linked (GlcNAc...) asparagine glycan is attached at Asn178. Residues Gln424–Met483 are disordered. Basic and acidic residues predominate over residues Gln430–Gln472. Positions Glu451–Lys481 form a coiled coil. The span at Met473–Met483 shows a compositional bias: basic residues.

This sequence belongs to the CCDC47 family. In terms of assembly, component of the PAT complex, composed of WDR83OS/Asterix and CCDC47. The PAT complex is part of the multi-pass translocon (MPT) complex, composed of three subcomplexes, the GEL complex (composed of RAB5IF/OPTI and TMCO1), the BOS complex (composed of NCLN/Nicalin, NOMO1 and TMEM147) and the PAT complex (composed of WDR83OS/Asterix and CCDC47). The MPT complex associates with the SEC61 complex. Interacts with VCP, HSPA5, DERL1, DERL2 and SELENOS.

The protein resides in the endoplasmic reticulum membrane. It is found in the rough endoplasmic reticulum membrane. Component of the multi-pass translocon (MPT) complex that mediates insertion of multi-pass membrane proteins into the lipid bilayer of membranes. The MPT complex takes over after the SEC61 complex: following membrane insertion of the first few transmembrane segments of proteins by the SEC61 complex, the MPT complex occludes the lateral gate of the SEC61 complex to promote insertion of subsequent transmembrane regions. Within the MPT complex, the PAT subcomplex sequesters any highly polar regions in the transmembrane domains away from the non-polar membrane environment until they can be buried in the interior of the fully assembled protein. Within the PAT subcomplex, CCDC47 occludes the lateral gate of the SEC61 complex. Involved in the regulation of calcium ion homeostasis in the ER. Required for proper protein degradation via the ERAD (ER-associated degradation) pathway. Has an essential role in the maintenance of ER organization during embryogenesis. This is PAT complex subunit CCDC47 (CCDC47) from Pongo abelii (Sumatran orangutan).